A 263-amino-acid polypeptide reads, in one-letter code: HTH-type transcriptional repressor NanR (263 aa).

Residues 1–23 (MSPMNAFDPQAEDSTTTIGRNLR) are disordered. The HTH gntR-type domain occupies 30–98 (KKLSEMVEEE…NGERARVSRP (69 aa)). Positions 58-77 (ERELMAFFNVGRPSVREALA) form a DNA-binding region, H-T-H motif.

This sequence belongs to the NanR family.

In terms of biological role, transcriptional repressor that controls expression of the genes required for the catabolism of sialic acids. This is HTH-type transcriptional repressor NanR from Escherichia coli O45:K1 (strain S88 / ExPEC).